The sequence spans 174 residues: Single-stranded DNA-binding protein 1 (174 aa).

Residues 6-111 enclose the SSB domain; it reads VNKVILVGNL…VVVNVGGTMQ (106 aa). A DNA-binding region spans residues 55–61; sequence WHRVVLF. The segment at 110-174 is disordered; the sequence is MQMLGGRQGG…PMDFDDDIPF (65 aa). A compositionally biased stretch (gly residues) spans 115 to 133; it reads GRQGGGAPAGGGQQQGGWG. Residues 134–160 show a composition bias toward low complexity; the sequence is QPQQPQGGNQFSGGAQSRPQQQAPAAP. Positions 169–174 match the Important for interaction with partner proteins motif; the sequence is DDDIPF.

As to quaternary structure, homotetramer. Binds PriA via its C-terminus.

Plays an important role in DNA replication, recombination and repair. Binds to ssDNA and to an array of partner proteins to recruit them to their sites of action during DNA metabolism. Stimulates the ATPase activity of PriA. One tetramer binds to 26 nucleotides (nt) of ssDNA, a 55 nt piece of ssDNA probably binds 2 tetramers. The sequence is that of Single-stranded DNA-binding protein 1 from Klebsiella pneumoniae subsp. pneumoniae (strain ATCC 700721 / MGH 78578).